The following is a 306-amino-acid chain: Bifunctional protein FolD 1 (306 aa).

NADP(+)-binding positions include 168–170 (GRS), Ser193, and Ile234.

It belongs to the tetrahydrofolate dehydrogenase/cyclohydrolase family. Homodimer.

The enzyme catalyses (6R)-5,10-methylene-5,6,7,8-tetrahydrofolate + NADP(+) = (6R)-5,10-methenyltetrahydrofolate + NADPH. It catalyses the reaction (6R)-5,10-methenyltetrahydrofolate + H2O = (6R)-10-formyltetrahydrofolate + H(+). It functions in the pathway one-carbon metabolism; tetrahydrofolate interconversion. Functionally, catalyzes the oxidation of 5,10-methylenetetrahydrofolate to 5,10-methenyltetrahydrofolate and then the hydrolysis of 5,10-methenyltetrahydrofolate to 10-formyltetrahydrofolate. The polypeptide is Bifunctional protein FolD 1 (Rhizobium meliloti (strain 1021) (Ensifer meliloti)).